A 367-amino-acid chain; its full sequence is Histidinol-phosphate aminotransferase 1 (367 aa).

Lysine 229 carries the N6-(pyridoxal phosphate)lysine modification.

It belongs to the class-II pyridoxal-phosphate-dependent aminotransferase family. Histidinol-phosphate aminotransferase subfamily. As to quaternary structure, homodimer. Requires pyridoxal 5'-phosphate as cofactor.

The catalysed reaction is L-histidinol phosphate + 2-oxoglutarate = 3-(imidazol-4-yl)-2-oxopropyl phosphate + L-glutamate. It functions in the pathway amino-acid biosynthesis; L-histidine biosynthesis; L-histidine from 5-phospho-alpha-D-ribose 1-diphosphate: step 7/9. This chain is Histidinol-phosphate aminotransferase 1 (hisC1), found in Mesorhizobium japonicum (strain LMG 29417 / CECT 9101 / MAFF 303099) (Mesorhizobium loti (strain MAFF 303099)).